A 460-amino-acid polypeptide reads, in one-letter code: Serine--tRNA ligase (460 aa).

Threonine 255–glutamate 257 contacts L-serine. ATP contacts are provided by residues arginine 286–glutamate 288 and valine 302. Glutamate 309 provides a ligand contact to L-serine. ATP is bound at residue glutamate 373–serine 376. Threonine 409 serves as a coordination point for L-serine.

This sequence belongs to the class-II aminoacyl-tRNA synthetase family. Type-1 seryl-tRNA synthetase subfamily. As to quaternary structure, homodimer. The tRNA molecule binds across the dimer.

It localises to the cytoplasm. It carries out the reaction tRNA(Ser) + L-serine + ATP = L-seryl-tRNA(Ser) + AMP + diphosphate + H(+). It catalyses the reaction tRNA(Sec) + L-serine + ATP = L-seryl-tRNA(Sec) + AMP + diphosphate + H(+). It participates in aminoacyl-tRNA biosynthesis; selenocysteinyl-tRNA(Sec) biosynthesis; L-seryl-tRNA(Sec) from L-serine and tRNA(Sec): step 1/1. Its function is as follows. Catalyzes the attachment of serine to tRNA(Ser). Is also able to aminoacylate tRNA(Sec) with serine, to form the misacylated tRNA L-seryl-tRNA(Sec), which will be further converted into selenocysteinyl-tRNA(Sec). This chain is Serine--tRNA ligase, found in Hyperthermus butylicus (strain DSM 5456 / JCM 9403 / PLM1-5).